Reading from the N-terminus, the 317-residue chain is Protease HtpX homolog (317 aa).

A run of 2 helical transmembrane segments spans residues 6-26 (TAIL…AIGG) and 28-48 (GGMM…YWNS). His-130 serves as a coordination point for Zn(2+). Residue Glu-131 is part of the active site. Residue His-134 participates in Zn(2+) binding. The next 2 helical transmembrane spans lie at 145–165 (MTAT…LFGG) and 173–193 (PFGA…AMLV). Zn(2+) is bound at residue Glu-202. The disordered stretch occupies residues 283–317 (GGGGFAPGPAPAVRPPGGNPWGVDPGGGQRRGPWG). Positions 290–300 (GPAPAVRPPGG) are enriched in pro residues. Residues 306 to 317 (DPGGGQRRGPWG) are compositionally biased toward gly residues.

The protein belongs to the peptidase M48B family. Zn(2+) is required as a cofactor.

Its subcellular location is the cell inner membrane. The protein is Protease HtpX homolog of Xanthobacter autotrophicus (strain ATCC BAA-1158 / Py2).